The chain runs to 778 residues: Probable cation-transporting ATPase exp7 (778 aa).

Residues 1–37 are Cytoplasmic-facing; that stretch reads MDKNKIMGLTQREVKERQAEGLVNDFTASASTSTWQI. Residues 38-57 traverse the membrane as a helical segment; the sequence is VKRNVFTLFNALNFAIALAL. Residues 58-64 lie on the Extracellular side of the membrane; the sequence is AFVQAWS. A helical membrane pass occupies residues 65–84; the sequence is NLVFFAVICFNAFSGIVTEL. The Cytoplasmic segment spans residues 85–209; it reads RAKHMVDKLN…PINSRIMKSL (125 aa). A helical membrane pass occupies residues 210 to 229; the sequence is DKLAGFTGKIIIPFGLALLL. Residues 230-242 are Extracellular-facing; sequence EALLLKGLPLKSS. A helical transmembrane segment spans residues 243–260; the sequence is VVNSSTALLGMLPKGIAL. Residues 261–586 lie on the Cytoplasmic side of the membrane; it reads LTITSLLTAV…FEGRRVVNNI (326 aa). The active-site 4-aspartylphosphate intermediate is aspartate 298. Residues aspartate 532 and aspartate 536 each coordinate Mg(2+). The chain crosses the membrane as a helical span at residues 587–606; that stretch reads AHIAPIFLIKTIYSFLLAVI. Topologically, residues 607 to 624 are extracellular; it reads CIASALLGRSEWILIFPF. Residues 625 to 645 traverse the membrane as a helical segment; that stretch reads IPIQITMIDQFVEGFPPFVLT. Topologically, residues 646 to 663 are cytoplasmic; the sequence is FERNIKPVEQNFLRKSML. The helical transmembrane segment at 664-684 threads the bilayer; it reads RALPSALMVVFSVLFVKMFGA. The Extracellular segment spans residues 685-689; that stretch reads SQGWS. The chain crosses the membrane as a helical span at residues 690 to 708; that stretch reads ELEISTLLYYLLGSIGFLS. Residues 709 to 716 are Cytoplasmic-facing; that stretch reads VFRACMPF. A helical membrane pass occupies residues 717–739; that stretch reads TLWRVLLIVWSVGGFLATALFPR. The Extracellular portion of the chain corresponds to 740 to 757; it reads IQKLLEISTLTEQTLPVY. A helical transmembrane segment spans residues 758 to 777; it reads GVMMLVFTVIFILTSRYQAK. A topological domain (cytoplasmic) is located at residue lysine 778.

The protein belongs to the cation transport ATPase (P-type) (TC 3.A.3) family.

The protein localises to the cell membrane. It catalyses the reaction ATP + H2O = ADP + phosphate + H(+). In Streptococcus pneumoniae serotype 4 (strain ATCC BAA-334 / TIGR4), this protein is Probable cation-transporting ATPase exp7 (exp7).